A 149-amino-acid chain; its full sequence is UPAR/Ly6 domain-containing protein bou (149 aa).

The N-terminal stretch at 1-31 (MWPPKHAHIGWLSSLALVVLLMSLQMVMVSG) is a signal peptide. Residues 32-126 (IECYVCDTSD…YTCDTDGCNA (95 aa)) lie on the Extracellular side of the membrane. 5 disulfides stabilise this stretch: C34–C74, C37–C48, C65–C91, C100–C115, and C119–C124. The N-linked (GlcNAc...) asparagine glycan is linked to N64. N125 is lipidated: GPI-anchor amidated asparagine. The propeptide at 126–149 (AAGRLELEWGVAAALLTLTWLLRH) is removed in mature form. Residues 127–147 (AGRLELEWGVAAALLTLTWLL) traverse the membrane as a helical segment. Residues 148 to 149 (RH) are Cytoplasmic-facing.

GPI-anchored.

The protein localises to the cell membrane. The protein resides in the cell junction. It localises to the septate junction. Its subcellular location is the cytoplasm. It is found in the cell cortex. The protein localises to the secreted. The protein resides in the apicolateral cell membrane. Involved in tracheal paracellular barrier functions mediated by epithelial cell septate junctions. Involved in paracellular barrier functions mediated by glial cell septate junctions in the peripheral nervous system, including the chordotonal organs, but not the hemolymph-brain barrier (the insect blood-brain barrier) of the central nervous system. Required for septate junction assembly, possibly by organizing the preassembly and transport of septate junction proteins such as dlg1/disks large 1, Nrx-IV/Neurexin-IV and the claudin protein kune. Involved in chitin fiber organization during tracheal development. Secreted, possibly in association with extracellular vesicles, to act non-autonomously on tissues distant from its site of expression. The protein is UPAR/Ly6 domain-containing protein bou of Drosophila melanogaster (Fruit fly).